Reading from the N-terminus, the 362-residue chain is Heat-inducible transcription repressor HrcA (362 aa).

It belongs to the HrcA family.

Its function is as follows. Negative regulator of class I heat shock genes (grpE-dnaK-dnaJ and groELS operons). Prevents heat-shock induction of these operons. The polypeptide is Heat-inducible transcription repressor HrcA (Nitrobacter winogradskyi (strain ATCC 25391 / DSM 10237 / CIP 104748 / NCIMB 11846 / Nb-255)).